A 308-amino-acid chain; its full sequence is Sulfate adenylyltransferase subunit 2 (308 aa).

The disordered stretch occupies residues 286-308 (RQGRIIDHDGSASMEKKKQEGYF).

The protein belongs to the PAPS reductase family. CysD subfamily. Heterodimer composed of CysD, the smaller subunit, and CysN.

The catalysed reaction is sulfate + ATP + H(+) = adenosine 5'-phosphosulfate + diphosphate. It participates in sulfur metabolism; hydrogen sulfide biosynthesis; sulfite from sulfate: step 1/3. With CysN forms the ATP sulfurylase (ATPS) that catalyzes the adenylation of sulfate producing adenosine 5'-phosphosulfate (APS) and diphosphate, the first enzymatic step in sulfur assimilation pathway. APS synthesis involves the formation of a high-energy phosphoric-sulfuric acid anhydride bond driven by GTP hydrolysis by CysN coupled to ATP hydrolysis by CysD. The polypeptide is Sulfate adenylyltransferase subunit 2 (Nocardia farcinica (strain IFM 10152)).